A 411-amino-acid chain; its full sequence is Citrate synthase (411 aa).

Residues H304 and D363 contribute to the active site.

It belongs to the citrate synthase family.

The enzyme catalyses oxaloacetate + acetyl-CoA + H2O = citrate + CoA + H(+). Its pathway is carbohydrate metabolism; tricarboxylic acid cycle; isocitrate from oxaloacetate: step 1/2. The sequence is that of Citrate synthase (gltA) from Rickettsia australis.